The sequence spans 1027 residues: MAETNNECSIKVLCRFRPLNQAEILRGDKFIPIFQGDDSVIIGGKPYVFDRVFPPNTTQEQVYHACAMQIVKDVLAGYNGTIFAYGQTSSGKTHTMEGKLHDPQLMGIIPRIARDIFNHIYSMDENLEFHIKVSYFEIYLDKIRDLLDVTKTNLSVHEDKNRVPFVKGCTERFVSSPEEILDVIDEGKSNRHVAVTNMNEHSSRSHSIFLINIKQENVETEQKLSGKLYLVDLAGSEKVSKTGAEGAVLDEAKNINKSLSALGNVISALAEGTKSYVPYRDSKMTRILQDSLGGNCRTTMFICCSPSSYNDAETKSTLMFGQRAKTIKNTASVNLELTAEQWKKKYEKEKEKTKAQKETIAKLEAELSRWRNGENVPETERLAGEDSALGAELCEETPVNDNSSIVVRIAPEERQKYEEEIRRLYKQLDDKDDEINQQSQLIEKLKQQMLDQEELLVSTRGDNEKVQRELSHLQSENDAAKDEVKEVLQALEELAVNYDQKSQEVEEKSQQNQLLVDELSQKVATMLSLESELQRLQEVSGHQRKRIAEVLNGLMRDLSEFSVIVGNGEIKLPVEISGAIEEEFTVARLYISKIKSEVKSVVKRCRQLENLQVECHRKMEVTGRELSSCQLLISQHEAKIRSLTEYMQTVELKKRHLEESYDSLSDELARLQAHETVHEVALKDKEPDTQDAEEVKKALELQMENHREAHHRQLARLRDEINEKQKTIDELKDLNQKLQLELEKLQADYERLKNEENEKSAKLQELTFLYERHEQSKQDLKGLEETVARELQTLHNLRKLFVQDVTTRVKKSAEMEPEDSGGIHSQKQKISFLENNLEQLTKVHKQLVRDNADLRCELPKLEKRLRATAERVKALEGALKEAKEGAMKDKRRYQQEVDRIKEAVRYKSSGKRGHSAQIAKPVRPGHYPASSPTNPYGTRSPECISYTNNLFQNYQNLHLQAAPSSTSDMYFASSGATSVAPLASYQKANMDNGNATDINDNRSDLPCGYEAEDQAKLFPLHQETAAS.

N-acetylalanine is present on alanine 2. The region spanning 9–327 is the Kinesin motor domain; it reads SIKVLCRFRP…LMFGQRAKTI (319 aa). An ATP-binding site is contributed by 86 to 93; that stretch reads GQTSSGKT. Positions 174 to 315 are microtubule-binding; it reads VSSPEEILDV…PSSYNDAETK (142 aa). Positions 271 to 361 are necessary for interaction with ZFYVE27; sequence EGTKSYVPYR…KTKAQKETIA (91 aa). Positions 331-906 form a coiled coil; it reads ASVNLELTAE…VDRIKEAVRY (576 aa). Positions 353–1027 are interaction with BICD2; the sequence is TKAQKETIAK…FPLHQETAAS (675 aa). Threonine 397 is subject to Phosphothreonine. Residues 906–937 form a disordered region; that stretch reads YKSSGKRGHSAQIAKPVRPGHYPASSPTNPYG. Positions 907–1027 are globular; it reads KSSGKRGHSA…FPLHQETAAS (121 aa).

This sequence belongs to the TRAFAC class myosin-kinesin ATPase superfamily. Kinesin family. Kinesin subfamily. As to quaternary structure, oligomer composed of two heavy chains and two light chains. Interacts with GRIP1. Interacts with FMR1 (via C-terminus); this interaction is increased in a mGluR-dependent manner. Interacts with BORCS5. Interacts with ZFYVE27. Interacts with VAPA, VAPB, SURF4, RAB11A (GDP-bound form), RAB11B (GDP-bound form) and RTN3 in a ZFYVE27-dependent manner. Interacts with BICD2. Interacts with DTNB.

It is found in the cytoplasm. It localises to the perinuclear region. The protein localises to the cytoskeleton. The protein resides in the perikaryon. It carries out the reaction ATP + H2O + a kinesin associated with a microtubule at position (n) = ADP + phosphate a kinesin associated with a microtubule at position (n+1, toward the plus end).. Its function is as follows. Microtubule-dependent motor required for slow axonal transport of neurofilament proteins (NFH, NFM and NFL). Can induce formation of neurite-like membrane protrusions in non-neuronal cells in a ZFYVE27-dependent manner. The ZFYVE27-KIF5A complex contributes to the vesicular transport of VAPA, VAPB, SURF4, RAB11A, RAB11B and RTN3 proteins in neurons. Required for anterograde axonal transportation of MAPK8IP3/JIP3 which is essential for MAPK8IP3/JIP3 function in axon elongation. The protein is Kinesin heavy chain isoform 5A (Kif5a) of Mus musculus (Mouse).